We begin with the raw amino-acid sequence, 510 residues long: MSAKKPLALVILDGYGYREDTASNAIANAKTPVMDALIANQPNTLISASGMDVGLPDGQMGNSEVGHTNIGAGRVVYQDLTRITKSILDGEFQQTAALVEAIDTAVKAEKAVHIMGLMSPGGVHSHEDHILAAVEMAAERGAEKIYLHCFLDGRDTPPRSAEGSLQRFQDLFAKLGKGRVASLVGRYYAMDRDNNWDRVQVAYDLLTQAKADFTYDSAVAGLAAAYERGENDEFVKATEIKAEGQESAAMQDGDAVIFMNYRADRARQITRTFVADFAGFERAAFPAVNFVMLTQYAADIPLAIAFPPASLENTYGEWLSKQGQTQLRISETEKYAHVTFFFNGGVETEFAGEERQLVASPKVATYDLQPEMSSTELTEKMVAAIKSGKYDTIICNYPNADMVGHTGVYEAAEKAIEALDASVGQVVEAIKEVGGQLLITADHGNAEMMVDPETGGIHTAHTSLPVPLIYVGDKAVEFKEGGKLSDLAPTMLSLAGLEIPAEMTGQVLVK.

Mn(2+) is bound by residues Asp-13 and Ser-63. Ser-63 acts as the Phosphoserine intermediate in catalysis. Substrate-binding positions include His-124, 154 to 155, Arg-186, Arg-192, 262 to 265, and Lys-334; these read RD and RADR. The Mn(2+) site is built by Asp-401, His-405, Asp-442, His-443, and His-461.

It belongs to the BPG-independent phosphoglycerate mutase family. Monomer. It depends on Mn(2+) as a cofactor.

The enzyme catalyses (2R)-2-phosphoglycerate = (2R)-3-phosphoglycerate. Its pathway is carbohydrate degradation; glycolysis; pyruvate from D-glyceraldehyde 3-phosphate: step 3/5. In terms of biological role, catalyzes the interconversion of 2-phosphoglycerate and 3-phosphoglycerate. This is 2,3-bisphosphoglycerate-independent phosphoglycerate mutase from Vibrio vulnificus (strain YJ016).